We begin with the raw amino-acid sequence, 385 residues long: 8-amino-7-oxononanoate synthase (385 aa).

R21 lines the substrate pocket. 108–109 (GF) lines the pyridoxal 5'-phosphate pocket. H133 lines the substrate pocket. Pyridoxal 5'-phosphate contacts are provided by S179, H207, and T233. The residue at position 236 (K236) is an N6-(pyridoxal phosphate)lysine. T352 serves as a coordination point for substrate.

Belongs to the class-II pyridoxal-phosphate-dependent aminotransferase family. BioF subfamily. Homodimer. It depends on pyridoxal 5'-phosphate as a cofactor.

The catalysed reaction is 6-carboxyhexanoyl-[ACP] + L-alanine + H(+) = (8S)-8-amino-7-oxononanoate + holo-[ACP] + CO2. It participates in cofactor biosynthesis; biotin biosynthesis. Catalyzes the decarboxylative condensation of pimeloyl-[acyl-carrier protein] and L-alanine to produce 8-amino-7-oxononanoate (AON), [acyl-carrier protein], and carbon dioxide. This Klebsiella pneumoniae (strain 342) protein is 8-amino-7-oxononanoate synthase.